Here is a 381-residue protein sequence, read N- to C-terminus: E3 ubiquitin-protein ligase At1g63170 (381 aa).

The tract at residues 1–23 is disordered; sequence MSRETTTEATPLILTDGGGGRRS. The next 2 helical transmembrane spans lie at 74-94 and 107-127; these read VVVL…AVLV and VWII…CVEY. Positions 135 to 161 are disordered; that stretch reads RRDLSPRSSSSSSSSSSSMDEEEGLGL. A compositionally biased stretch (low complexity) spans 140 to 152; that stretch reads PRSSSSSSSSSSS. Residues 170–194 are a coiled coil; that stretch reads LELGQLENENNSFAKHLESANTMIS. The next 3 membrane-spanning stretches (helical) occupy residues 189-209, 224-244, and 245-265; these read ANTM…SSGG, IVFL…ACVI, and GIAV…VAEQ. An RING-type; atypical zinc finger spans residues 325-366; sequence CCICLSAYEDETELRELPCGHHFHCGCVDKWLYINATCPLCK.

It is found in the membrane. The catalysed reaction is S-ubiquitinyl-[E2 ubiquitin-conjugating enzyme]-L-cysteine + [acceptor protein]-L-lysine = [E2 ubiquitin-conjugating enzyme]-L-cysteine + N(6)-ubiquitinyl-[acceptor protein]-L-lysine.. Its pathway is protein modification; protein ubiquitination. Its function is as follows. Mediates E2-dependent protein ubiquitination. This is E3 ubiquitin-protein ligase At1g63170 from Arabidopsis thaliana (Mouse-ear cress).